We begin with the raw amino-acid sequence, 500 residues long: NAD(P)H-quinone oxidoreductase chain 4, chloroplastic (500 aa).

The next 14 membrane-spanning stretches (helical) occupy residues 4 to 24 (FPWLTIIVVFPIFAGSLIFFL), 37 to 57 (ICICILELLLTTYAFCYHFQL), 87 to 107 (IGPILLTGFITTLATLAAWPI), 113 to 130 (LFHFIMLAMYSGQIGSFS), 134 to 154 (LLLFFIMWELELIPVYLLLAM), 167 to 187 (FILYTAGGSVFLLMGVLGVAL), 208 to 228 (VLEIIFYIGFFIAFAVKLPII), 242 to 262 (HYSTCMLLAGILLKMGAYGLI), 272 to 292 (AHSIFSPWLMIIGTIQIIYAA), 305 to 325 (IAYSSVSHMGFIIIGISSLTD), 330 to 350 (GALLQIISHGFIGAALFFLAG), 386 to 406 (LALPGMSGFVAELIVFFGIIT), 411 to 431 (VLIPKILITFVMAIGMILTPI), and 462 to 482 (LFLSISIFLPVIGIGIYPDFV).

Belongs to the complex I subunit 4 family.

It localises to the plastid. The protein resides in the chloroplast thylakoid membrane. The enzyme catalyses a plastoquinone + NADH + (n+1) H(+)(in) = a plastoquinol + NAD(+) + n H(+)(out). It catalyses the reaction a plastoquinone + NADPH + (n+1) H(+)(in) = a plastoquinol + NADP(+) + n H(+)(out). The polypeptide is NAD(P)H-quinone oxidoreductase chain 4, chloroplastic (Atropa belladonna (Belladonna)).